The chain runs to 176 residues: MRKVTLMDVFTHPIAQKYLQRSGVAHAIACAYHAYRLSVKADINPDLAAKAALLHDIGHYEWYTDGKWDYEKYKRNDIHAIKGAERAHKLLIRLGEEPKAAKEIALAILLHTDSYLPEGELDKNTLQQIVKKADELDEEPGGHHHYRQIDPSTARKKIEKLDQLIDQAQASVIKPV.

The region spanning 23–139 (GVAHAIACAY…VKKADELDEE (117 aa)) is the HD domain.

This chain is Putative phosphohydrolase YueE (yueE), found in Bacillus subtilis (strain 168).